The primary structure comprises 373 residues: Flagellar P-ring protein (373 aa).

A signal peptide spans 1–28 (MPRVSTHLVKLAAAALCALLLSAVAASA).

Belongs to the FlgI family. In terms of assembly, the basal body constitutes a major portion of the flagellar organelle and consists of four rings (L,P,S, and M) mounted on a central rod.

It localises to the periplasm. It is found in the bacterial flagellum basal body. Functionally, assembles around the rod to form the L-ring and probably protects the motor/basal body from shearing forces during rotation. This chain is Flagellar P-ring protein, found in Rhodopseudomonas palustris (strain ATCC BAA-98 / CGA009).